The following is a 227-amino-acid chain: 6-phosphogluconolactonase (227 aa).

The protein belongs to the glucosamine/galactosamine-6-phosphate isomerase family. 6-phosphogluconolactonase subfamily.

It catalyses the reaction 6-phospho-D-glucono-1,5-lactone + H2O = 6-phospho-D-gluconate + H(+). It functions in the pathway carbohydrate degradation; pentose phosphate pathway; D-ribulose 5-phosphate from D-glucose 6-phosphate (oxidative stage): step 2/3. Functionally, hydrolysis of 6-phosphogluconolactone to 6-phosphogluconate. The chain is 6-phosphogluconolactonase (pgl) from Helicobacter pylori (strain ATCC 700392 / 26695) (Campylobacter pylori).